The primary structure comprises 251 residues: Triosephosphate isomerase (251 aa).

9-11 (NWK) provides a ligand contact to substrate. The active-site Electrophile is the H95. Residue E167 is the Proton acceptor of the active site. Substrate is bound by residues G173, S213, and 234-235 (GG).

Belongs to the triosephosphate isomerase family. Homodimer.

Its subcellular location is the cytoplasm. It carries out the reaction D-glyceraldehyde 3-phosphate = dihydroxyacetone phosphate. Its pathway is carbohydrate biosynthesis; gluconeogenesis. It participates in carbohydrate degradation; glycolysis; D-glyceraldehyde 3-phosphate from glycerone phosphate: step 1/1. Its function is as follows. Involved in the gluconeogenesis. Catalyzes stereospecifically the conversion of dihydroxyacetone phosphate (DHAP) to D-glyceraldehyde-3-phosphate (G3P). The sequence is that of Triosephosphate isomerase from Citrifermentans bemidjiense (strain ATCC BAA-1014 / DSM 16622 / JCM 12645 / Bem) (Geobacter bemidjiensis).